The sequence spans 286 residues: Glycine--tRNA ligase alpha subunit (286 aa).

The protein belongs to the class-II aminoacyl-tRNA synthetase family. As to quaternary structure, tetramer of two alpha and two beta subunits.

Its subcellular location is the cytoplasm. It carries out the reaction tRNA(Gly) + glycine + ATP = glycyl-tRNA(Gly) + AMP + diphosphate. The sequence is that of Glycine--tRNA ligase alpha subunit from Campylobacter lari (strain RM2100 / D67 / ATCC BAA-1060).